Consider the following 513-residue polypeptide: Ferulic acid decarboxylase 1 (513 aa).

Mn(2+) contacts are provided by Asn174, His197, and Glu240. Prenylated FMN is bound by residues 174 to 179 (NWSIAR), 196 to 197 (QH), and Glu240. Residue Glu289 is the Proton donor of the active site. Lys405 lines the prenylated FMN pocket.

It belongs to the UbiD family. UbiD-like/FDC subfamily. As to quaternary structure, homodimer. May form higher order oligomers. It depends on Mn(2+) as a cofactor. The cofactor is prenylated FMN.

It is found in the cytoplasm. It carries out the reaction (E)-4-coumarate + H(+) = 4-vinylphenol + CO2. The enzyme catalyses (E)-cinnamate + H(+) = styrene + CO2. The catalysed reaction is (E)-ferulate + H(+) = 2-methoxy-4-vinylphenol + CO2. In terms of biological role, catalyzes the reversible decarboxylation of aromatic carboxylic acids like ferulic acid, p-coumaric acid or cinnamic acid, producing the corresponding vinyl derivatives 4-vinylphenol, 4-vinylguaiacol, and styrene, respectively, which play the role of aroma metabolites. This Candida dubliniensis (strain CD36 / ATCC MYA-646 / CBS 7987 / NCPF 3949 / NRRL Y-17841) (Yeast) protein is Ferulic acid decarboxylase 1.